Reading from the N-terminus, the 501-residue chain is U6 snRNA (guanine-N(2))-methyltransferase THUMPD2 (501 aa).

The 116-residue stretch at Thr-149–Val-264 folds into the THUMP domain. The disordered stretch occupies residues Leu-414–Pro-469. The span at His-430–Pro-442 shows a compositional bias: basic and acidic residues.

The protein belongs to the methyltransferase superfamily. As to quaternary structure, part of the heterodimeric THUMPD2-TRM112 methyltransferase complex; this complex forms an active tRNA methyltransferase, where TRMT112 acts as an activator of the catalytic subunit THUMPD2.

Its subcellular location is the nucleus. It catalyses the reaction guanosine in U6 snRNA + S-adenosyl-L-methionine = N(2)-methylguanosine in U6 snRNA + S-adenosyl-L-homocysteine + H(+). Catalytic subunit of the THUMPD2-TRM112 methyltransferase complex, that specifically mediates the S-adenosyl-L-methionine-dependent N(2)-methylation of guanosine nucleotides, most probably at position 72 (m2G72), in the U6snRNA of the major spliceosome. This modification in the U6 snRNA affects the constitutive splicing efficiency of introns that have suboptimal splice sites and can impact final mRNA levels. The chain is U6 snRNA (guanine-N(2))-methyltransferase THUMPD2 from Bos taurus (Bovine).